We begin with the raw amino-acid sequence, 259 residues long: Hydroxyethylthiazole kinase (259 aa).

M37 serves as a coordination point for substrate. Residues R113 and T158 each contribute to the ATP site. A substrate-binding site is contributed by G185.

Belongs to the Thz kinase family. The cofactor is Mg(2+).

The enzyme catalyses 5-(2-hydroxyethyl)-4-methylthiazole + ATP = 4-methyl-5-(2-phosphooxyethyl)-thiazole + ADP + H(+). It participates in cofactor biosynthesis; thiamine diphosphate biosynthesis; 4-methyl-5-(2-phosphoethyl)-thiazole from 5-(2-hydroxyethyl)-4-methylthiazole: step 1/1. In terms of biological role, catalyzes the phosphorylation of the hydroxyl group of 4-methyl-5-beta-hydroxyethylthiazole (THZ). The protein is Hydroxyethylthiazole kinase of Helicobacter pylori (strain Shi470).